We begin with the raw amino-acid sequence, 479 residues long: 6-phosphogluconate dehydrogenase, decarboxylating (479 aa).

Residues glycine 9–glycine 14, asparagine 32–threonine 34, isoleucine 74–alanine 76, and asparagine 102 each bind NADP(+). Substrate contacts are provided by residues asparagine 102 and serine 128–glycine 130. Catalysis depends on lysine 182, which acts as the Proton acceptor. Histidine 185–asparagine 186 serves as a coordination point for substrate. The active-site Proton donor is glutamate 189. Substrate-binding residues include tyrosine 190, lysine 259, arginine 286, arginine 446, and histidine 452.

This sequence belongs to the 6-phosphogluconate dehydrogenase family. As to quaternary structure, homodimer.

The catalysed reaction is 6-phospho-D-gluconate + NADP(+) = D-ribulose 5-phosphate + CO2 + NADPH. It functions in the pathway carbohydrate degradation; pentose phosphate pathway; D-ribulose 5-phosphate from D-glucose 6-phosphate (oxidative stage): step 3/3. In terms of biological role, catalyzes the oxidative decarboxylation of 6-phosphogluconate to ribulose 5-phosphate and CO(2), with concomitant reduction of NADP to NADPH. In Chlamydia pneumoniae (Chlamydophila pneumoniae), this protein is 6-phosphogluconate dehydrogenase, decarboxylating (gnd).